The following is an 829-amino-acid chain: 1,4-alpha-glucan branching enzyme GlgB (829 aa).

The Nucleophile role is filled by Asp405. Glu458 functions as the Proton donor in the catalytic mechanism. The interval 758-829 is disordered; it reads ASKATKVSTK…TTAKKTKDNA (72 aa). Composition is skewed to low complexity over residues 778 to 789 and 810 to 820; these read VKAATKSSVTKV and VTKTAKASAKT.

The protein belongs to the glycosyl hydrolase 13 family. GlgB subfamily. As to quaternary structure, monomer.

It carries out the reaction Transfers a segment of a (1-&gt;4)-alpha-D-glucan chain to a primary hydroxy group in a similar glucan chain.. It participates in glycan biosynthesis; glycogen biosynthesis. Its function is as follows. Catalyzes the formation of the alpha-1,6-glucosidic linkages in glycogen by scission of a 1,4-alpha-linked oligosaccharide from growing alpha-1,4-glucan chains and the subsequent attachment of the oligosaccharide to the alpha-1,6 position. The sequence is that of 1,4-alpha-glucan branching enzyme GlgB from Actinobacillus succinogenes (strain ATCC 55618 / DSM 22257 / CCUG 43843 / 130Z).